Here is a 114-residue protein sequence, read N- to C-terminus: Hemerythrin subunit 2 (114 aa).

Fe cation-binding residues include H26, H55, E59, H74, H78, H102, and D107.

This sequence belongs to the hemerythrin family.

Its function is as follows. Hemerythrin is a respiratory protein in blood cells of certain marine worms. The oxygen-binding site in each chain contains two iron atoms. This chain is Hemerythrin subunit 2, found in Golfingia vulgaris (Marine worm).